We begin with the raw amino-acid sequence, 494 residues long: Cysteine--tRNA ligase (494 aa).

Residue cysteine 29 coordinates Zn(2+). A 'HIGH' region motif is present at residues 31 to 41; it reads VTVYDHCHIGH. Zn(2+)-binding residues include cysteine 209, histidine 234, and glutamate 238. The 'KMSKS' region motif lies at 266–270; sequence KMSKS. Lysine 269 provides a ligand contact to ATP.

The protein belongs to the class-I aminoacyl-tRNA synthetase family. As to quaternary structure, monomer. Zn(2+) serves as cofactor.

It is found in the cytoplasm. The catalysed reaction is tRNA(Cys) + L-cysteine + ATP = L-cysteinyl-tRNA(Cys) + AMP + diphosphate. In Geotalea daltonii (strain DSM 22248 / JCM 15807 / FRC-32) (Geobacter daltonii), this protein is Cysteine--tRNA ligase.